The following is a 458-amino-acid chain: Monomethylamine methyltransferase MtmB (458 aa).

A non-standard amino acid (pyrrolysine) is located at residue pyrrolysine 202.

It belongs to the monomethylamine methyltransferase family. In terms of assembly, can form a complex with MtmC.

The enzyme catalyses Co(I)-[methylamine-specific corrinoid protein] + methylamine + H(+) = methyl-Co(III)-[methylamine-specific corrinoid protein] + NH4(+). It participates in one-carbon metabolism; methanogenesis from methylamine. Functionally, catalyzes the transfer of the methyl group from monomethylamine to the corrinoid cofactor of MtmC. This is Monomethylamine methyltransferase MtmB (mtmB1) from Methanosarcina mazei (strain ATCC BAA-159 / DSM 3647 / Goe1 / Go1 / JCM 11833 / OCM 88) (Methanosarcina frisia).